The primary structure comprises 338 residues: Ketol-acid reductoisomerase (NADP(+)) (338 aa).

Residues 1 to 181 (MKVYYDSDAD…GGGRAGIIET (181 aa)) form the KARI N-terminal Rossmann domain. Residues 24–27 (YGSQ), arginine 47, serine 50, serine 52, and 82–85 (DEHQ) contribute to the NADP(+) site. Histidine 107 is a catalytic residue. Residue glycine 133 coordinates NADP(+). In terms of domain architecture, KARI C-terminal knotted spans 182–327 (SFKEETETDL…AKLRAMMPWI (146 aa)). Mg(2+)-binding residues include aspartate 190, glutamate 194, glutamate 226, and glutamate 230. Serine 251 provides a ligand contact to substrate.

This sequence belongs to the ketol-acid reductoisomerase family. Mg(2+) serves as cofactor.

The catalysed reaction is (2R)-2,3-dihydroxy-3-methylbutanoate + NADP(+) = (2S)-2-acetolactate + NADPH + H(+). The enzyme catalyses (2R,3R)-2,3-dihydroxy-3-methylpentanoate + NADP(+) = (S)-2-ethyl-2-hydroxy-3-oxobutanoate + NADPH + H(+). It functions in the pathway amino-acid biosynthesis; L-isoleucine biosynthesis; L-isoleucine from 2-oxobutanoate: step 2/4. Its pathway is amino-acid biosynthesis; L-valine biosynthesis; L-valine from pyruvate: step 2/4. In terms of biological role, involved in the biosynthesis of branched-chain amino acids (BCAA). Catalyzes an alkyl-migration followed by a ketol-acid reduction of (S)-2-acetolactate (S2AL) to yield (R)-2,3-dihydroxy-isovalerate. In the isomerase reaction, S2AL is rearranged via a Mg-dependent methyl migration to produce 3-hydroxy-3-methyl-2-ketobutyrate (HMKB). In the reductase reaction, this 2-ketoacid undergoes a metal-dependent reduction by NADPH to yield (R)-2,3-dihydroxy-isovalerate. This is Ketol-acid reductoisomerase (NADP(+)) from Magnetococcus marinus (strain ATCC BAA-1437 / JCM 17883 / MC-1).